The following is a 318-amino-acid chain: uncharacterized protein (318 aa).

The span at 1-22 (MKASQERSEARRTAHSVKEKKY) shows a compositional bias: basic and acidic residues. 2 disordered regions span residues 1–29 (MKASQERSEARRTAHSVKEKKYMVMASPR) and 293–318 (DDGDDGDGDDDGDDDGDDDGGDDDDE).

This is an uncharacterized protein from Ictalurid herpesvirus 1 (strain Auburn) (IcHV-1).